Reading from the N-terminus, the 439-residue chain is Forkhead box protein J1-A (439 aa).

Residues 124-218 constitute a DNA-binding region (fork-head); it reads KPPYSYATLI…INGAMKKRRL (95 aa). The tract at residues 273 to 293 is disordered; the sequence is EHGWNSISDGKSHKRKQPLPK. Residues 284–293 are compositionally biased toward basic residues; the sequence is SHKRKQPLPK.

It belongs to the FOXJ1 family. As to expression, expressed in two independent areas of stage 10-11 embryos; in the dorsal blastopore lip (Spemann organizer) and shortly after in the ectodermal cells of the animal cap. As development proceeds, cells of the animal cap contribute to the epidermis and show a spotty pattern, which suggests expression in ciliated epidermal cells. Distribution of these cells is uniform in the trunk area of the embryo but more random in the head, being practically absent in the cement gland and olfactory placode. The spotted pattern becomes more dispersed as embryos grow in size. Due to cell movements during gastrulation, expression in the dorsal lip becomes located in the dorsal midline with expression restricted to the neuroectoderm. Expressed transiently in cells of the newly formed neural floor plate in the tail of older tadpoles.

The protein resides in the nucleus. Key transcription factor required for motile ciliogenesis. Activates genes essential for motile cilia formation and function. Required for ciliogenesis in multiciliated cells. This chain is Forkhead box protein J1-A (foxj1-a), found in Xenopus laevis (African clawed frog).